We begin with the raw amino-acid sequence, 308 residues long: Aliphatic nitrilase (308 aa).

One can recognise a CN hydrolase domain in the interval 4-270; sequence FRAAVVQAAP…ETILTADLDT (267 aa). Residue Glu44 is the Proton acceptor of the active site. Lys130 is a catalytic residue. Residue Cys164 is the Nucleophile of the active site.

The protein belongs to the carbon-nitrogen hydrolase superfamily. Nitrilase family.

The catalysed reaction is a nitrile + 2 H2O = a carboxylate + NH4(+). In terms of biological role, nitrilase that hydrolyzes preferentially phenylacetonitrile, but not (R,S)-mandelonitrile. Also acts on dinitriles like phenylenediacetonitriles (PDAs) 1,2-PDA, 1,3-PDA, and 1,4-PDA, and cyanophenyl acetonitriles (CPAs) 2-CPA and 4-CPA, but with lower activities. The protein is Aliphatic nitrilase (nit) of Sinorhizobium fredii (strain HH103).